A 602-amino-acid chain; its full sequence is NADH-quinone oxidoreductase subunit C/D (602 aa).

Residues 1–192 (MVNNMTDLTA…DPFELTKAKQ (192 aa)) form an NADH dehydrogenase I subunit C region. Residues 216–602 (DFMFLNLGPN…IDFVMSDVDR (387 aa)) are NADH dehydrogenase I subunit D.

It in the N-terminal section; belongs to the complex I 30 kDa subunit family. The protein in the C-terminal section; belongs to the complex I 49 kDa subunit family. In terms of assembly, NDH-1 is composed of 13 different subunits. Subunits NuoB, CD, E, F, and G constitute the peripheral sector of the complex.

The protein localises to the cell inner membrane. The enzyme catalyses a quinone + NADH + 5 H(+)(in) = a quinol + NAD(+) + 4 H(+)(out). Functionally, NDH-1 shuttles electrons from NADH, via FMN and iron-sulfur (Fe-S) centers, to quinones in the respiratory chain. The immediate electron acceptor for the enzyme in this species is believed to be ubiquinone. Couples the redox reaction to proton translocation (for every two electrons transferred, four hydrogen ions are translocated across the cytoplasmic membrane), and thus conserves the redox energy in a proton gradient. In Klebsiella pneumoniae (strain 342), this protein is NADH-quinone oxidoreductase subunit C/D.